The following is a 133-amino-acid chain: Capsid protein (133 aa).

Belongs to the Leviviricetes capsid protein family. As to quaternary structure, homodimer. The capsid protein dimer binds to the viral RNA via an operator hairpin, but also many other RNA sequences in the viral genome.

The protein localises to the virion. Its function is as follows. Capsid protein self-assembles to form an icosahedral capsid with a T=3 symmetry, about 26 nm in diameter, and consisting of 89 capsid proteins dimers (178 capsid proteins). Involved in viral genome encapsidation through the interaction between a capsid protein dimer and the multiple packaging signals present in the RNA genome. Binding of the capsid proteins to the viral RNA induces a conformational change required for efficient T=3 shell formation. The capsid also contains 1 copy of the A2 maturation protein. Acts as a translational repressor of viral replicase synthesis late in infection. This latter function is the result of capsid protein interaction with an RNA hairpin which contains the replicase ribosome-binding site. The chain is Capsid protein from Escherichia coli.